Reading from the N-terminus, the 226-residue chain is MKTKKQQYVTIKGTKNGLTLHLDDACSFDELLDGLQNMLSIEQYTDGKGQKISVHIKLGHRYLYQEQAEKLTDLIASKKDLVVHSIDSEVIAKEEAQRMKEEQEIVSVSKIVRSGQVLHVTGDLLLIGDVNPGGTIRAGGNIFVLGSLKGIAHAGYNGNNRAVIAASEMMPTQLRINHVLNRSPDHIQKGNDMECAYLDTDGNMVIERLQQLAHLRPDLTRLEGGM.

This sequence belongs to the MinC family. Interacts with MinD and FtsZ.

Its function is as follows. Cell division inhibitor that blocks the formation of polar Z ring septums. Rapidly oscillates between the poles of the cell to destabilize FtsZ filaments that have formed before they mature into polar Z rings. Prevents FtsZ polymerization. This is Probable septum site-determining protein MinC from Bacillus velezensis (strain DSM 23117 / BGSC 10A6 / LMG 26770 / FZB42) (Bacillus amyloliquefaciens subsp. plantarum).